We begin with the raw amino-acid sequence, 158 residues long: Regulator of sigma D (158 aa).

It belongs to the Rsd/AlgQ family. In terms of assembly, interacts with RpoD.

The protein localises to the cytoplasm. Binds RpoD and negatively regulates RpoD-mediated transcription activation by preventing the interaction between the primary sigma factor RpoD with the catalytic core of the RNA polymerase and with promoter DNA. May be involved in replacement of the RNA polymerase sigma subunit from RpoD to RpoS during the transition from exponential growth to the stationary phase. The polypeptide is Regulator of sigma D (Shigella dysenteriae serotype 1 (strain Sd197)).